Consider the following 21-residue polypeptide: Nigrocin-2GRb (21 aa).

In terms of tissue distribution, expressed by the skin glands.

It is found in the secreted. Functionally, antimicrobial peptide active against the Gram-positive bacterium S.aureus (MIC=12.5 uM) and against the Gram-negative bacteria E.coli (MIC=3 uM). Has antifungal activity against C.albicans (MIC=50 uM). Has some hemolytic activity against human erythrocytes (LC(50)=40 uM). This Odorrana grahami (Yunnanfu frog) protein is Nigrocin-2GRb.